A 718-amino-acid polypeptide reads, in one-letter code: Polyribonucleotide nucleotidyltransferase (718 aa).

The Mg(2+) site is built by aspartate 487 and aspartate 493. The region spanning 554-613 (PRIETFKIPTDKIREVIGTGGKVIREIVEKTGAKVNIEDDGTVKVASSDGESIKAAIKWI) is the KH domain. An S1 motif domain is found at 623-691 (GEIYEGTVVK…DRGKTRLSMK (69 aa)). The interval 692 to 718 (VVDQETGEDLEAKQKAEGDAPREAAGE) is disordered. A compositionally biased stretch (basic and acidic residues) spans 701 to 718 (LEAKQKAEGDAPREAAGE).

This sequence belongs to the polyribonucleotide nucleotidyltransferase family. The cofactor is Mg(2+).

Its subcellular location is the cytoplasm. It catalyses the reaction RNA(n+1) + phosphate = RNA(n) + a ribonucleoside 5'-diphosphate. Functionally, involved in mRNA degradation. Catalyzes the phosphorolysis of single-stranded polyribonucleotides processively in the 3'- to 5'-direction. This Nitrobacter winogradskyi (strain ATCC 25391 / DSM 10237 / CIP 104748 / NCIMB 11846 / Nb-255) protein is Polyribonucleotide nucleotidyltransferase.